A 467-amino-acid polypeptide reads, in one-letter code: Probable endopeptidase p60 (467 aa).

The signal sequence occupies residues 1-27 (MNMKKATIAATAGIAVTAFAAPTIASA). Positions 28 to 71 (STVVVEAGDTLWGIAQSKGTTVDAIKKANNLTTDKIVPGQKLQV) constitute a LysM 1 domain. An SH3b domain is found at 79–143 (KAEKSVSATW…VNGKYLTDKA (65 aa)). 2 disordered regions span residues 154–199 (KKET…QNAT) and 247–348 (KTVA…GSTN). Over residues 172-185 (KQPTTQQTAPAPKA) the composition is skewed to low complexity. A LysM 2 domain is found at 199-242 (TTHNVKSGDTIWALSVKYGVSVQDIMSWNNLSSSSIYVGQKLAI). A compositionally biased stretch (low complexity) spans 288 to 348 (TEQQTTTKAP…NTNTNQGSTN (61 aa)). Residues 330–343 (TNTNTNTNTNTNTN) are 7 X 2 AA tandem repeats of T-N. A NlpC/P60 domain is found at 349–467 (NASASALIAE…GKFLVGFGRV (119 aa)). The active-site Nucleophile is the Cys-379. Catalysis depends on His-429, which acts as the Proton acceptor. Residue Asn-441 is part of the active site.

This sequence belongs to the peptidase C40 family.

In terms of biological role, this major extracellular protein may be involved in the invasion of non-professional phagocytic cells by Listeria. The sequence is that of Probable endopeptidase p60 (iap) from Listeria innocua serovar 6a (strain ATCC BAA-680 / CLIP 11262).